A 37-amino-acid polypeptide reads, in one-letter code: NADH dehydrogenase [ubiquinone] 1 alpha subcomplex subunit 5 (37 aa).

Belongs to the complex I NDUFA5 subunit family. In terms of assembly, complex I is composed of about 45 different subunits.

The protein localises to the mitochondrion inner membrane. Accessory subunit of the mitochondrial membrane respiratory chain NADH dehydrogenase (Complex I), that is believed not to be involved in catalysis. Complex I functions in the transfer of electrons from NADH to the respiratory chain. The immediate electron acceptor for the enzyme is believed to be ubiquinone. The sequence is that of NADH dehydrogenase [ubiquinone] 1 alpha subcomplex subunit 5 from Solanum tuberosum (Potato).